The primary structure comprises 611 residues: Alkyldihydroxyacetonephosphate synthase (611 aa).

The FAD-binding PCMH-type domain occupies 137–317 (VKNAPDLIVL…TEAVMKVHAV (181 aa)). FAD is bound by residues 169–175 (PMGGGSN), 237–243 (DSFEFST), 250–255 (TCSSGH), and 301–307 (EGTLGII). Arginine 447 is a substrate binding site. Tyrosine 508 serves as the catalytic Proton donor/acceptor. The segment at 544–546 (HHH) is important for enzyme activity. The Microbody targeting signal signature appears at 609–611 (PKL).

It belongs to the FAD-binding oxidoreductase/transferase type 4 family. In terms of assembly, homodimer. It depends on FAD as a cofactor.

It is found in the peroxisome. The catalysed reaction is a long chain fatty alcohol + a 1-acylglycerone 3-phosphate = a 1-O-alkylglycerone 3-phosphate + a long-chain fatty acid + H(+). It participates in glycerolipid metabolism; ether lipid biosynthesis. Catalyzes the exchange of an acyl for a long-chain alkyl group and the formation of the ether bond in the biosynthesis of ether phospholipids. This is Alkyldihydroxyacetonephosphate synthase (eapA) from Dictyostelium discoideum (Social amoeba).